Consider the following 155-residue polypeptide: Large ribosomal subunit protein uL13 (155 aa).

The protein belongs to the universal ribosomal protein uL13 family. As to quaternary structure, part of the 50S ribosomal subunit.

This protein is one of the early assembly proteins of the 50S ribosomal subunit, although it is not seen to bind rRNA by itself. It is important during the early stages of 50S assembly. In Rickettsia bellii (strain OSU 85-389), this protein is Large ribosomal subunit protein uL13.